A 239-amino-acid polypeptide reads, in one-letter code: Demethylmenaquinone methyltransferase (239 aa).

S-adenosyl-L-methionine contacts are provided by residues Thr60, Asp81, and 106 to 107; that span reads DA.

The protein belongs to the class I-like SAM-binding methyltransferase superfamily. MenG/UbiE family.

The enzyme catalyses a 2-demethylmenaquinol + S-adenosyl-L-methionine = a menaquinol + S-adenosyl-L-homocysteine + H(+). It participates in quinol/quinone metabolism; menaquinone biosynthesis; menaquinol from 1,4-dihydroxy-2-naphthoate: step 2/2. Its function is as follows. Methyltransferase required for the conversion of demethylmenaquinol (DMKH2) to menaquinol (MKH2). The sequence is that of Demethylmenaquinone methyltransferase from Staphylococcus haemolyticus (strain JCSC1435).